A 730-amino-acid polypeptide reads, in one-letter code: Probable G-protein coupled receptor 149 (730 aa).

Residues methionine 1–serine 34 lie on the Extracellular side of the membrane. Asparagine 7, asparagine 10, and asparagine 20 each carry an N-linked (GlcNAc...) asparagine glycan. The helical transmembrane segment at leucine 35 to valine 55 threads the bilayer. Topologically, residues serine 56 to methionine 68 are cytoplasmic. A helical membrane pass occupies residues leucine 69–valine 89. At leucine 90–alanine 108 the chain is on the extracellular side. Cysteine 104 and cysteine 181 are oxidised to a cystine. The chain crosses the membrane as a helical span at residues leucine 109–tyrosine 131. Over threonine 132–glutamine 148 the chain is Cytoplasmic. Residues valine 149–cysteine 169 form a helical membrane-spanning segment. Topologically, residues glycine 170–proline 188 are extracellular. A helical membrane pass occupies residues tyrosine 189–valine 209. At proline 210–arginine 308 the chain is on the cytoplasmic side. The helical transmembrane segment at phenylalanine 309–valine 329 threads the bilayer. The Extracellular segment spans residues valine 330–proline 340. Residues valine 341 to leucine 361 form a helical membrane-spanning segment. Over serine 362–asparagine 730 the chain is Cytoplasmic.

The protein belongs to the G-protein coupled receptor 1 family. In terms of tissue distribution, expressed exclusively in brain and testis.

The protein localises to the cell membrane. Orphan receptor. This Rattus norvegicus (Rat) protein is Probable G-protein coupled receptor 149 (Gpr149).